The primary structure comprises 267 residues: Pyridoxine/pyridoxamine 5'-phosphate oxidase (267 aa).

Substrate contacts are provided by residues 20 to 23 and K80; that span reads RQGY. Residues 75–80, 90–91, R96, K97, and Q119 each bind FMN; these read RTVLLK and YT. Residues Y137, R141, and S145 each contribute to the substrate site. Residues 154 to 155 and W200 contribute to the FMN site; that span reads QS. Residue 206-208 coordinates substrate; sequence RLH. FMN is bound at residue R210.

The protein belongs to the pyridoxamine 5'-phosphate oxidase family. In terms of assembly, homodimer. It depends on FMN as a cofactor.

It catalyses the reaction pyridoxamine 5'-phosphate + O2 + H2O = pyridoxal 5'-phosphate + H2O2 + NH4(+). It carries out the reaction pyridoxine 5'-phosphate + O2 = pyridoxal 5'-phosphate + H2O2. It functions in the pathway cofactor metabolism; pyridoxal 5'-phosphate salvage; pyridoxal 5'-phosphate from pyridoxamine 5'-phosphate: step 1/1. It participates in cofactor metabolism; pyridoxal 5'-phosphate salvage; pyridoxal 5'-phosphate from pyridoxine 5'-phosphate: step 1/1. Catalyzes the oxidation of either pyridoxine 5'-phosphate (PNP) or pyridoxamine 5'-phosphate (PMP) into pyridoxal 5'-phosphate (PLP). This chain is Pyridoxine/pyridoxamine 5'-phosphate oxidase, found in Frankia casuarinae (strain DSM 45818 / CECT 9043 / HFP020203 / CcI3).